A 422-amino-acid chain; its full sequence is UDP-N-acetylglucosamine 1-carboxyvinyltransferase (422 aa).

Lys-22–Asn-23 serves as a coordination point for phosphoenolpyruvate. Arg-92 is a binding site for UDP-N-acetyl-alpha-D-glucosamine. Catalysis depends on Cys-116, which acts as the Proton donor. Cys-116 carries the post-translational modification 2-(S-cysteinyl)pyruvic acid O-phosphothioketal. UDP-N-acetyl-alpha-D-glucosamine is bound by residues Arg-121–Leu-125, Asp-307, and Leu-329.

The protein belongs to the EPSP synthase family. MurA subfamily.

It is found in the cytoplasm. The enzyme catalyses phosphoenolpyruvate + UDP-N-acetyl-alpha-D-glucosamine = UDP-N-acetyl-3-O-(1-carboxyvinyl)-alpha-D-glucosamine + phosphate. The protein operates within cell wall biogenesis; peptidoglycan biosynthesis. Its function is as follows. Cell wall formation. Adds enolpyruvyl to UDP-N-acetylglucosamine. This chain is UDP-N-acetylglucosamine 1-carboxyvinyltransferase, found in Aliarcobacter butzleri (strain RM4018) (Arcobacter butzleri).